A 42-amino-acid polypeptide reads, in one-letter code: Gastric inhibitory polypeptide (42 aa).

Belongs to the glucagon family.

Its subcellular location is the secreted. In terms of biological role, potent stimulator of insulin secretion and relatively poor inhibitor of gastric acid secretion. In Sus scrofa (Pig), this protein is Gastric inhibitory polypeptide (GIP).